Consider the following 694-residue polypeptide: Elongation factor G (694 aa).

Residues 9–288 enclose the tr-type G domain; sequence DAIRNIGIMA…VIVKWLPSPL (280 aa). Residues 18 to 25, 82 to 86, and 136 to 139 each bind GTP; these read AHIDAGKT, DTPGH, and NKMD.

The protein belongs to the TRAFAC class translation factor GTPase superfamily. Classic translation factor GTPase family. EF-G/EF-2 subfamily.

The protein localises to the cytoplasm. Catalyzes the GTP-dependent ribosomal translocation step during translation elongation. During this step, the ribosome changes from the pre-translocational (PRE) to the post-translocational (POST) state as the newly formed A-site-bound peptidyl-tRNA and P-site-bound deacylated tRNA move to the P and E sites, respectively. Catalyzes the coordinated movement of the two tRNA molecules, the mRNA and conformational changes in the ribosome. In Chlamydia trachomatis serovar A (strain ATCC VR-571B / DSM 19440 / HAR-13), this protein is Elongation factor G.